The sequence spans 357 residues: Protein pelota homolog (357 aa).

It belongs to the eukaryotic release factor 1 family. Pelota subfamily. As to quaternary structure, monomer. A divalent metal cation serves as cofactor.

It is found in the cytoplasm. In terms of biological role, may function in recognizing stalled ribosomes, interact with stem-loop structures in stalled mRNA molecules, and effect endonucleolytic cleavage of the mRNA. May play a role in the release non-functional ribosomes and degradation of damaged mRNAs. Has endoribonuclease activity. The sequence is that of Protein pelota homolog from Halobacterium salinarum (strain ATCC 29341 / DSM 671 / R1).